Reading from the N-terminus, the 206-residue chain is LexA repressor (206 aa).

The H-T-H motif DNA-binding region spans valine 28 to alanine 48. Catalysis depends on for autocatalytic cleavage activity residues serine 128 and lysine 166.

Belongs to the peptidase S24 family. As to quaternary structure, homodimer.

The catalysed reaction is Hydrolysis of Ala-|-Gly bond in repressor LexA.. Functionally, represses a number of genes involved in the response to DNA damage (SOS response), including recA and lexA. In the presence of single-stranded DNA, RecA interacts with LexA causing an autocatalytic cleavage which disrupts the DNA-binding part of LexA, leading to derepression of the SOS regulon and eventually DNA repair. This chain is LexA repressor, found in Bacillus velezensis (strain DSM 23117 / BGSC 10A6 / LMG 26770 / FZB42) (Bacillus amyloliquefaciens subsp. plantarum).